The sequence spans 92 residues: Sec-independent protein translocase protein TatA (92 aa).

A helical transmembrane segment spans residues 1-21 (MGIFDWKHWIVILVVVVLVFG). Positions 43–92 (MNDDEKPADPTVTPAQPVPPVQPQATAQANPPHTIDVQAQKVEEPIRKDV) are disordered. Positions 65–74 (PQATAQANPP) are enriched in low complexity. Positions 83–92 (KVEEPIRKDV) are enriched in basic and acidic residues.

It belongs to the TatA/E family. The Tat system comprises two distinct complexes: a TatABC complex, containing multiple copies of TatA, TatB and TatC subunits, and a separate TatA complex, containing only TatA subunits. Substrates initially bind to the TatABC complex, which probably triggers association of the separate TatA complex to form the active translocon.

The protein resides in the cell inner membrane. Functionally, part of the twin-arginine translocation (Tat) system that transports large folded proteins containing a characteristic twin-arginine motif in their signal peptide across membranes. TatA could form the protein-conducting channel of the Tat system. The sequence is that of Sec-independent protein translocase protein TatA from Pseudomonas fluorescens (strain Pf0-1).